A 669-amino-acid polypeptide reads, in one-letter code: DNA ligase (669 aa).

Residue 35–39 participates in NAD(+) binding; it reads DFEYD. The disordered stretch occupies residues 52–71; it reads YPEWDSPDSPTHRVGSDKTE. A compositionally biased stretch (basic and acidic residues) spans 61–71; that stretch reads PTHRVGSDKTE. NAD(+)-binding positions include 84–85 and E115; that span reads SL. The N6-AMP-lysine intermediate role is filled by K117. 4 residues coordinate NAD(+): R138, E175, K290, and K314. Zn(2+) is bound by residues C408, C411, C426, and C432. In terms of domain architecture, BRCT spans 590 to 669; the sequence is PVSARLAGKT…EEEFLRLIEE (80 aa).

It belongs to the NAD-dependent DNA ligase family. LigA subfamily. The cofactor is Mg(2+). It depends on Mn(2+) as a cofactor.

The catalysed reaction is NAD(+) + (deoxyribonucleotide)n-3'-hydroxyl + 5'-phospho-(deoxyribonucleotide)m = (deoxyribonucleotide)n+m + AMP + beta-nicotinamide D-nucleotide.. Functionally, DNA ligase that catalyzes the formation of phosphodiester linkages between 5'-phosphoryl and 3'-hydroxyl groups in double-stranded DNA using NAD as a coenzyme and as the energy source for the reaction. It is essential for DNA replication and repair of damaged DNA. The protein is DNA ligase of Porphyromonas gingivalis (strain ATCC 33277 / DSM 20709 / CIP 103683 / JCM 12257 / NCTC 11834 / 2561).